The following is a 184-amino-acid chain: MIKMNDITRDGNPVLRKRAEKLTFPLDPKYLKVADEMMEYLKNSQDPAIAEKYHLRAGVGLAAPQIGLSIQMASVLVPGPDNTIDLEETLVNPVIVSQSVQIAALEEGEGCLSVDKDVPGYVPRHDRITVRYQTLDGEEKTIKLRDYPAIVCQHEIDHLKGTLFYDHINKENPLDIEDNAILIG.

Residues cysteine 111 and histidine 154 each contribute to the Fe cation site. The active site involves glutamate 155. Histidine 158 is a Fe cation binding site.

The protein belongs to the polypeptide deformylase family. Fe(2+) is required as a cofactor.

The catalysed reaction is N-terminal N-formyl-L-methionyl-[peptide] + H2O = N-terminal L-methionyl-[peptide] + formate. Its function is as follows. Removes the formyl group from the N-terminal Met of newly synthesized proteins. Requires at least a dipeptide for an efficient rate of reaction. N-terminal L-methionine is a prerequisite for activity but the enzyme has broad specificity at other positions. The sequence is that of Peptide deformylase from Pediococcus pentosaceus (strain ATCC 25745 / CCUG 21536 / LMG 10740 / 183-1w).